The sequence spans 254 residues: 5'/3'-nucleotidase SurE (254 aa).

Residues aspartate 9, aspartate 10, serine 40, and asparagine 93 each contribute to the a divalent metal cation site.

This sequence belongs to the SurE nucleotidase family. The cofactor is a divalent metal cation.

It is found in the cytoplasm. The enzyme catalyses a ribonucleoside 5'-phosphate + H2O = a ribonucleoside + phosphate. It carries out the reaction a ribonucleoside 3'-phosphate + H2O = a ribonucleoside + phosphate. It catalyses the reaction [phosphate](n) + H2O = [phosphate](n-1) + phosphate + H(+). In terms of biological role, nucleotidase with a broad substrate specificity as it can dephosphorylate various ribo- and deoxyribonucleoside 5'-monophosphates and ribonucleoside 3'-monophosphates with highest affinity to 3'-AMP. Also hydrolyzes polyphosphate (exopolyphosphatase activity) with the preference for short-chain-length substrates (P20-25). Might be involved in the regulation of dNTP and NTP pools, and in the turnover of 3'-mononucleotides produced by numerous intracellular RNases (T1, T2, and F) during the degradation of various RNAs. This is 5'/3'-nucleotidase SurE from Yersinia pseudotuberculosis serotype O:1b (strain IP 31758).